We begin with the raw amino-acid sequence, 85 residues long: Large ribosomal subunit protein bL27 (85 aa).

The interval 1–24 is disordered; that stretch reads MAHKKGVGSSRNGRDSDGQRLGCK.

It belongs to the bacterial ribosomal protein bL27 family.

This Geotalea daltonii (strain DSM 22248 / JCM 15807 / FRC-32) (Geobacter daltonii) protein is Large ribosomal subunit protein bL27.